Here is a 1095-residue protein sequence, read N- to C-terminus: 1-phosphatidylinositol 4,5-bisphosphate phosphodiesterase (1095 aa).

The PI-PLC X-box domain maps to 319–469 (MEMDQPLAHY…LKRKILIKNK (151 aa)). Catalysis depends on residues His-334 and His-381. Positions 467 and 469 each coordinate substrate. Positions 487–529 (ELKTDDDPEEDASAGKPPEAAAAPAPAPEAAAAAEGAAEGGGG) are disordered. A compositionally biased stretch (low complexity) spans 500-523 (AGKPPEAAAAPAPAPEAAAAAEGA). Positions 550 to 666 (LSSMVNYAQP…GYLLKPDFMR (117 aa)) constitute a PI-PLC Y-box domain. Ser-579 and Arg-606 together coordinate substrate. Residues 666-794 (RRADKDFDPF…SLRTEANFPM (129 aa)) form the C2 domain. Disordered stretches follow at residues 842–863 (IEEQ…EKKE) and 1000–1030 (QAKM…LREK). 2 stretches are compositionally biased toward basic and acidic residues: residues 852–863 (DAGKAKEEEKKE) and 1007–1030 (TAKE…LREK).

Interacts with inaD. In terms of tissue distribution, abundantly expressed in the adult retina.

The enzyme catalyses a 1,2-diacyl-sn-glycero-3-phospho-(1D-myo-inositol-4,5-bisphosphate) + H2O = 1D-myo-inositol 1,4,5-trisphosphate + a 1,2-diacyl-sn-glycerol + H(+). Functionally, the production of the second messenger molecules diacylglycerol (DAG) and inositol 1,4,5-trisphosphate (IP3) is mediated by activated phosphatidylinositol-specific phospholipase C enzymes. Essential component of the phototransduction pathway. Essential downstream component of a hh-signaling pathway which regulates the Duox-dependent gut immune response to bacterial uracil; required for the activation of Cad99C and consequently Cad99C-dependent endosome formation, which is essential for the Duox-dependent production of reactive oxygen species (ROS) in response to intestinal bacterial infection. In Drosophila melanogaster (Fruit fly), this protein is 1-phosphatidylinositol 4,5-bisphosphate phosphodiesterase.